We begin with the raw amino-acid sequence, 208 residues long: MPKVDVYDINGKVVGEINLRDDIFGIEVNKHAIHQVIVNQLANRRQGTQSTKTKSEVRGGGRKPWRQKGTGRARHGSIRSAQWVKGGIALGPKPRSYKYAVPKKLRRLALKSALSSKVNENELLVLDSLNFDEIKTKQMANVLKNLKVNDTTAVLVLADKNRNVELSARNIPGLKTLFVNTMNVYDIIRHDKFIITKDAVAKVEEVYA.

The interval 44-76 (RRQGTQSTKTKSEVRGGGRKPWRQKGTGRARHG) is disordered. The span at 60–76 (GGRKPWRQKGTGRARHG) shows a compositional bias: basic residues.

The protein belongs to the universal ribosomal protein uL4 family. Part of the 50S ribosomal subunit.

One of the primary rRNA binding proteins, this protein initially binds near the 5'-end of the 23S rRNA. It is important during the early stages of 50S assembly. It makes multiple contacts with different domains of the 23S rRNA in the assembled 50S subunit and ribosome. In terms of biological role, forms part of the polypeptide exit tunnel. This Acetivibrio thermocellus (strain ATCC 27405 / DSM 1237 / JCM 9322 / NBRC 103400 / NCIMB 10682 / NRRL B-4536 / VPI 7372) (Clostridium thermocellum) protein is Large ribosomal subunit protein uL4.